The sequence spans 567 residues: Structural protein ORF567 (567 aa).

A disordered region spans residues 7 to 393 (INALLGFPEE…MPIEHKPEQQ (387 aa)). Pro residues predominate over residues 65 to 79 (TPTPIRPAPPPPPPI). Positions 180–200 (PKREPEHHTHGSTNNEHESKR) are enriched in basic and acidic residues. Positions 219 to 231 (THQTSPSHSSGGT) are enriched in low complexity. Pro residues-rich tracts occupy residues 253 to 278 (MPIP…PTPP) and 285 to 299 (TPTP…PPPT). Positions 300 to 312 (HGSSSTNSSGSTN) are enriched in low complexity. The span at 319–335 (PKPIPIPPTPPPPPPHH) shows a compositional bias: pro residues. Residues 343 to 353 (PKHESEHHDHG) show a composition bias toward basic and acidic residues. Low complexity predominate over residues 354–372 (SSSTNSSSSTSNSSSGGTN).

Its subcellular location is the virion. This chain is Structural protein ORF567, found in Acidianus two-tailed virus (ATV).